The sequence spans 360 residues: Peptide chain release factor 1 (360 aa).

Gln235 is modified (N5-methylglutamine). A disordered region spans residues 284-313 (AKRQQAEASTRRNLLGSGDRSDRNRTYNFP).

The protein belongs to the prokaryotic/mitochondrial release factor family. In terms of processing, methylated by PrmC. Methylation increases the termination efficiency of RF1.

Its subcellular location is the cytoplasm. Its function is as follows. Peptide chain release factor 1 directs the termination of translation in response to the peptide chain termination codons UAG and UAA. This Salmonella agona (strain SL483) protein is Peptide chain release factor 1.